Consider the following 251-residue polypeptide: Large ribosomal subunit protein uL3 (251 aa).

Glutamine 151 carries the N5-methylglutamine modification. Positions 219 to 251 are disordered; it reads PGAFRRNGEEAAAAPAAEAPAETPAEEAGQEGA. The segment covering 228–241 has biased composition (low complexity); the sequence is EAAAAPAAEAPAET. Acidic residues predominate over residues 242–251; it reads PAEEAGQEGA.

Belongs to the universal ribosomal protein uL3 family. In terms of assembly, part of the 50S ribosomal subunit. Forms a cluster with proteins L14 and L19. In terms of processing, methylated by PrmB.

In terms of biological role, one of the primary rRNA binding proteins, it binds directly near the 3'-end of the 23S rRNA, where it nucleates assembly of the 50S subunit. This Parvibaculum lavamentivorans (strain DS-1 / DSM 13023 / NCIMB 13966) protein is Large ribosomal subunit protein uL3.